The following is a 730-amino-acid chain: uncharacterized protein (730 aa).

2 positions are modified to phosphoserine: serine 82 and serine 89. Disordered regions lie at residues 82 to 114 (SPVRRHNSIQPSNSGKNSTEKTSTKGSRTTGSY) and 447 to 468 (NTNHNFTTNNNNENESNDSKNE). Residues 89–98 (SIQPSNSGKN) are compositionally biased toward polar residues. Positions 449 to 460 (NHNFTTNNNNEN) are enriched in low complexity. 2 positions are modified to phosphoserine: serine 483 and serine 651.

This is an uncharacterized protein from Saccharomyces cerevisiae (strain ATCC 204508 / S288c) (Baker's yeast).